We begin with the raw amino-acid sequence, 1476 residues long: Membrane-associated guanylate kinase, WW and PDZ domain-containing protein 3 (1476 aa).

The PDZ 1 domain occupies 18–108 (CAVSWAGPPG…PIRLKTVKPG (91 aa)). Positions 18–108 (CAVSWAGPPG…PIRLKTVKPG (91 aa)) are interaction with ADRB1 and TGFA. The Guanylate kinase-like domain maps to 116-290 (RHYLSLQFQK…SSMDFRNYMM (175 aa)). 123 to 130 (FQKGSIDH) lines the ATP pocket. The segment at 184–266 (TYDGNFYGTP…ETREMHSETS (83 aa)) is disordered. Residues 193 to 204 (PKPPAEPSPFQP) are compositionally biased toward pro residues. Serine 236 bears the Phosphoserine mark. The span at 238–247 (LPEEEEDEDK) shows a compositional bias: acidic residues. WW domains lie at 296 to 329 (EPLP…DPRL) and 342 to 375 (GELP…NPVE). In terms of domain architecture, PDZ 2 spans 413-495 (RASLKKSTMG…NQYVNLTLCR (83 aa)). The segment at 413–495 (RASLKKSTMG…NQYVNLTLCR (83 aa)) is interaction with PTEN. The tract at residues 551–575 (LASDRLNGPSESSEQRASLASSGSS) is disordered. Over residues 559-575 (PSESSEQRASLASSGSS) the composition is skewed to polar residues. The region spanning 581–657 (TIPLIKGPKG…GADVPLLILR (77 aa)) is the PDZ 3 domain. Serine 598 carries the phosphoserine modification. A disordered region spans residues 664-691 (TKTAKTKTDTKENSGSLETINEPIPQPM). Phosphoserine is present on serine 702. Residues 729 to 811 (DVFLRKQESG…NGHVLLTVRR (83 aa)) enclose the PDZ 4 domain. The tract at residues 729 to 811 (DVFLRKQESG…NGHVLLTVRR (83 aa)) is interaction with ADGRB1. The disordered stretch occupies residues 818 to 844 (KQPEDESHQAFSQNGSPRLNRAELPTR). 2 positions are modified to phosphoserine: serine 833 and serine 916. Residues 852–939 (DVTLQRKENE…TVTLTVVAEE (88 aa)) enclose the PDZ 5 domain. The tract at residues 852–939 (DVTLQRKENE…TVTLTVVAEE (88 aa)) is interaction with LPAR2 and GRIN2B. Residues 939 to 966 (EEHHGPPSGTNSARQSPALQHRPMGQAQ) form a disordered region. The segment covering 946–956 (SGTNSARQSPA) has biased composition (polar residues). The PDZ 6 domain maps to 1022-1104 (PVELERGPRG…KVLLLLRPGT (83 aa)). Disordered regions lie at residues 1109–1151 (DHGD…ATED) and 1168–1476 (TVQE…DKQL). The span at 1114–1123 (DTNSPSSSNV) shows a compositional bias: polar residues. Basic and acidic residues-rich tracts occupy residues 1193-1211 (SKKD…RLKG) and 1230-1265 (RHSE…ESKG). Over residues 1285–1304 (SSSPKKQQKIGGNSLSNTEG) the composition is skewed to polar residues. 2 stretches are compositionally biased toward basic and acidic residues: residues 1317 to 1340 (HPRD…KDLK) and 1350 to 1361 (KSPEKKSSKVDE). The residue at position 1321 (serine 1321) is a Phosphoserine. Positions 1363–1373 (SLPSKKTSSTA) are enriched in polar residues. A compositionally biased stretch (basic and acidic residues) spans 1419 to 1437 (ADDHKGRESEVTDRCRERA).

Belongs to the MAGUK family. Interacts with ADRB1, ADGRB1, LPAR2/EDG4, GRIN2B, PTEN, and PTPRB. Interacts with unidentified tyrosine phosphorylated proteins. Interacts with FZD4, FZD7, TGFA and VANGL2. Interacts with DLL1. Interacts with PRRG4 (via cytoplasmic domain). Widely expressed. Colocalizes with TGFA in neurons in the cortex and dentate gyrus, as well as in ependymal cells and some astrocytes (at protein level). Present in lens epithelium.

It localises to the cell membrane. The protein localises to the cell junction. The protein resides in the tight junction. It is found in the nucleus. Acts as a scaffolding protein at cell-cell junctions, thereby regulating various cellular and signaling processes. Cooperates with PTEN to modulate the kinase activity of AKT1. Its interaction with PTPRB and tyrosine phosphorylated proteins suggests that it may link receptor tyrosine phosphatase with its substrates at the plasma membrane. In polarized epithelial cells, involved in efficient trafficking of TGFA to the cell surface. Regulates the ability of LPAR2 to activate ERK and RhoA pathways. Regulates the JNK signaling cascade via its interaction with FZD4 and VANGL2. The protein is Membrane-associated guanylate kinase, WW and PDZ domain-containing protein 3 (Magi3) of Mus musculus (Mouse).